The sequence spans 366 residues: UDP-N-acetylglucosamine--N-acetylmuramyl-(pentapeptide) pyrophosphoryl-undecaprenol N-acetylglucosamine transferase (366 aa).

UDP-N-acetyl-alpha-D-glucosamine contacts are provided by residues 15 to 17, Asn-127, Arg-175, Ser-201, Ile-255, and Gln-300; that span reads TGG.

Belongs to the glycosyltransferase 28 family. MurG subfamily.

Its subcellular location is the cell inner membrane. The enzyme catalyses di-trans,octa-cis-undecaprenyl diphospho-N-acetyl-alpha-D-muramoyl-L-alanyl-D-glutamyl-meso-2,6-diaminopimeloyl-D-alanyl-D-alanine + UDP-N-acetyl-alpha-D-glucosamine = di-trans,octa-cis-undecaprenyl diphospho-[N-acetyl-alpha-D-glucosaminyl-(1-&gt;4)]-N-acetyl-alpha-D-muramoyl-L-alanyl-D-glutamyl-meso-2,6-diaminopimeloyl-D-alanyl-D-alanine + UDP + H(+). It participates in cell wall biogenesis; peptidoglycan biosynthesis. Cell wall formation. Catalyzes the transfer of a GlcNAc subunit on undecaprenyl-pyrophosphoryl-MurNAc-pentapeptide (lipid intermediate I) to form undecaprenyl-pyrophosphoryl-MurNAc-(pentapeptide)GlcNAc (lipid intermediate II). The polypeptide is UDP-N-acetylglucosamine--N-acetylmuramyl-(pentapeptide) pyrophosphoryl-undecaprenol N-acetylglucosamine transferase (Thiobacillus denitrificans (strain ATCC 25259 / T1)).